A 281-amino-acid chain; its full sequence is sn-glycerol-3-phosphate transport system permease protein UgpE (281 aa).

A run of 6 helical transmembrane segments spans residues 14–34 (VMLIIGVLLILFPLYVAFVAA), 82–104 (VMAFAITVGKITVSMLSAYAIVY), 113–133 (FFWLIFLTLMLPVEVRIFPTI), 142–162 (LDSYTGLTLPLMASATATFLF), 188–210 (FWDIVLPLSKTNLAALFVITFIY), and 247–267 (WNQVMAAMILTLIPPVAVVLL). The ABC transmembrane type-1 domain maps to 77–268 (LFNSFVMAFA…IPPVAVVLLM (192 aa)).

This sequence belongs to the binding-protein-dependent transport system permease family. UgpAE subfamily. As to quaternary structure, the complex is composed of two ATP-binding proteins (UgpC), two transmembrane proteins (UgpA and UgpE) and a solute-binding protein (UgpB).

The protein localises to the cell inner membrane. Part of the ABC transporter complex UgpBAEC involved in sn-glycerol-3-phosphate (G3P) import. Probably responsible for the translocation of the substrate across the membrane. This is sn-glycerol-3-phosphate transport system permease protein UgpE (ugpE) from Yersinia enterocolitica serotype O:8 / biotype 1B (strain NCTC 13174 / 8081).